We begin with the raw amino-acid sequence, 542 residues long: Nuclear speckle splicing regulatory protein 1 (542 aa).

The tract at residues 21–53 is disordered; it reads RVLQKPSVFGSDSDDDETSVSESLQREAAKKQA. Phosphoserine occurs at positions 27, 31, and 33. Residues 103-172 are a coiled coil; it reads IHNLLKAVEI…RAAALEAHLD (70 aa). Positions 105 to 169 are necessary for alternative splicing activity; that stretch reads NLLKAVEIRK…REKRAAALEA (65 aa). Positions 190 to 516 are disordered; sequence AVGEEAAPKS…FAKRSNEETV (327 aa). Residues lysine 198 and lysine 209 each participate in a glycyl lysine isopeptide (Lys-Gly) (interchain with G-Cter in SUMO2) cross-link. Residues 200–217 are compositionally biased toward basic and acidic residues; the sequence is SFREARTVIKEEKLRGYP. Positions 223-232 are enriched in polar residues; the sequence is ESRPPQQSCV. Residues 239-256 show a composition bias toward acidic residues; that stretch reads EAEENPDADREFDDESSE. Phosphoserine is present on residues serine 254 and serine 255. Basic and acidic residues predominate over residues 257–271; that stretch reads DGEKRDHKVKSRGED. N6-acetyllysine is present on lysine 277. Basic residues predominate over residues 277 to 288; sequence KHPKHHKNRAHS. A Glycyl lysine isopeptide (Lys-Gly) (interchain with G-Cter in SUMO2) cross-link involves residue lysine 280. Basic and acidic residues-rich tracts occupy residues 309–335, 343–475, and 485–501; these read RGHEHQDRQSRDQESCHKDRSHREEKS, SHKD…KPSH, and RLAEERPEKGSEQERPP. Residues 372–413 are a coiled coil; sequence KREKYSSREQERDRQRNDHDRYSEKEKKRKEKEEHTKARRER. Phosphoserine is present on serine 443.

It belongs to the NSRP1 family. As to quaternary structure, interacts (via C-terminus) with SRSF1. Interacts (via C-terminus) with SRSF2.

It localises to the nucleus. The protein localises to the nucleus speckle. Its function is as follows. RNA-binding protein that mediates pre-mRNA alternative splicing regulation. In Mus musculus (Mouse), this protein is Nuclear speckle splicing regulatory protein 1 (Nsrp1).